The sequence spans 528 residues: Nucleolar GTP-binding protein 1 (528 aa).

Residues 168-335 (RTLLVCGFPN…VKAMACDLLL (168 aa)) enclose the OBG-type G domain. GTP-binding positions include 174 to 181 (GFPNVGKS), 220 to 224 (DTPGI), and 287 to 290 (SKSD). The segment at 470 to 528 (PDSWKHRSRNSGGDIAVHVRRDSKTQVAQPPRLPSKKKARFDDKHYYDRKPKHLYRGRK) is disordered. Basic and acidic residues predominate over residues 509-518 (RFDDKHYYDR). The span at 519 to 528 (KPKHLYRGRK) shows a compositional bias: basic residues.

This sequence belongs to the TRAFAC class OBG-HflX-like GTPase superfamily. OBG GTPase family. NOG subfamily.

It localises to the nucleus. It is found in the nucleolus. In terms of biological role, involved in the biogenesis of the 60S ribosomal subunit. The protein is Nucleolar GTP-binding protein 1 (NOG1) of Encephalitozoon cuniculi (strain GB-M1) (Microsporidian parasite).